The sequence spans 419 residues: MRFVDYVSIEVVAGKGGDGIISFRREAHVDKGGPDGGDGGWGGSIYFVGDSGMNTLLPFYQTKKIFGYNGENGRPKRQTGANGKDIFIKVPLGTQVFLKKSLICDIILEKKYLIAKGGRGGLGNFHFRNSKNKAPRISENGELGQNFYLDLQLKVMADIGLVGKPNAGKSTLLSLISNSKPKIANYEFTTLVPQLGVVKIYENSFVTADLPGLIQGASSGKGMGIIFLKHIERCRAIVHVIDFGSDNKNPIKDFIEIKSELEKFNKKLLDLNQIVIANKCDLPNFQFNLANFKRKFPKIKIIKSSLISAKQNEINIIKEKMFGLLEEKQKKLEIQEINTSKIEFNLKAPFLIKSRNNGFFEITGELIQKIIQKIPLNSQENILRFNAKVKKIGLWDELIKKGIKPGDLVRIYEFEFHWN.

Residues 1–156 (MRFVDYVSIE…FYLDLQLKVM (156 aa)) enclose the Obg domain. The region spanning 157 to 334 (ADIGLVGKPN…LEEKQKKLEI (178 aa)) is the OBG-type G domain. GTP-binding positions include 163–170 (GKPNAGKS), 188–192 (FTTLV), 209–212 (DLPG), 278–281 (NKCD), and 315–317 (NII). Positions 170 and 190 each coordinate Mg(2+). Residues 342–419 (IEFNLKAPFL…RIYEFEFHWN (78 aa)) form the OCT domain.

This sequence belongs to the TRAFAC class OBG-HflX-like GTPase superfamily. OBG GTPase family. As to quaternary structure, monomer. It depends on Mg(2+) as a cofactor.

Its subcellular location is the cytoplasm. Functionally, an essential GTPase which binds GTP, GDP and possibly (p)ppGpp with moderate affinity, with high nucleotide exchange rates and a fairly low GTP hydrolysis rate. Plays a role in control of the cell cycle, stress response, ribosome biogenesis and in those bacteria that undergo differentiation, in morphogenesis control. The sequence is that of GTPase Obg from Mesomycoplasma hyopneumoniae (strain 232) (Mycoplasma hyopneumoniae).